A 193-amino-acid polypeptide reads, in one-letter code: Orotate phosphoribosyltransferase (193 aa).

114 to 122 contacts 5-phospho-alpha-D-ribose 1-diphosphate; that stretch reads EDVITTGGS. T118 and R146 together coordinate orotate.

Belongs to the purine/pyrimidine phosphoribosyltransferase family. PyrE subfamily. Homodimer. Mg(2+) is required as a cofactor.

The enzyme catalyses orotidine 5'-phosphate + diphosphate = orotate + 5-phospho-alpha-D-ribose 1-diphosphate. It functions in the pathway pyrimidine metabolism; UMP biosynthesis via de novo pathway; UMP from orotate: step 1/2. Catalyzes the transfer of a ribosyl phosphate group from 5-phosphoribose 1-diphosphate to orotate, leading to the formation of orotidine monophosphate (OMP). The chain is Orotate phosphoribosyltransferase from Chlorobaculum parvum (strain DSM 263 / NCIMB 8327) (Chlorobium vibrioforme subsp. thiosulfatophilum).